A 389-amino-acid polypeptide reads, in one-letter code: Arrestin-C (389 aa).

It belongs to the arrestin family. Retina and pineal gland.

Its function is as follows. May play a role in an as yet undefined retina-specific signal transduction. Could bind to photoactivated-phosphorylated red/green opsins. The polypeptide is Arrestin-C (arr3) (Aquarana catesbeiana (American bullfrog)).